A 212-amino-acid chain; its full sequence is 3-isopropylmalate dehydratase small subunit 2 (212 aa).

Belongs to the LeuD family. LeuD type 1 subfamily. As to quaternary structure, heterodimer of LeuC and LeuD.

It carries out the reaction (2R,3S)-3-isopropylmalate = (2S)-2-isopropylmalate. It participates in amino-acid biosynthesis; L-leucine biosynthesis; L-leucine from 3-methyl-2-oxobutanoate: step 2/4. In terms of biological role, catalyzes the isomerization between 2-isopropylmalate and 3-isopropylmalate, via the formation of 2-isopropylmaleate. The protein is 3-isopropylmalate dehydratase small subunit 2 of Chromobacterium violaceum (strain ATCC 12472 / DSM 30191 / JCM 1249 / CCUG 213 / NBRC 12614 / NCIMB 9131 / NCTC 9757 / MK).